The primary structure comprises 188 residues: Viral FLICE protein (188 aa).

2 DED domains span residues 2-74 and 93-169; these read ATYE…DLLH and PYQL…QVQT.

As to quaternary structure, interacts with host RIPK1, TRAF2, MAP3K14, IKBKB, and IKBKG. Interacts with host CADM1; this interaction is essential for chronic NF-kappa-B activation.

Its function is as follows. Plays a role in the modulation of host signaling pathways by acting as an activator of both the classic and the alternative NF-kappa-B pathways. Thereby, initiates an important range of cellular processes to promote cell survival, proliferation and protection from apoptosis. This Human herpesvirus 8 type P (isolate GK18) (HHV-8) protein is Viral FLICE protein (ORF71).